Here is a 361-residue protein sequence, read N- to C-terminus: 3-dehydroquinate synthase (361 aa).

It belongs to the archaeal-type DHQ synthase family.

It catalyses the reaction 2-amino-2,3,7-trideoxy-D-lyxo-hept-6-ulosonate + NAD(+) + H2O = 3-dehydroquinate + NH4(+) + NADH + H(+). Its function is as follows. Catalyzes the oxidative deamination and cyclization of 2-amino-3,7-dideoxy-D-threo-hept-6-ulosonic acid (ADH) to yield 3-dehydroquinate (DHQ), which is fed into the canonical shikimic pathway of aromatic amino acid biosynthesis. The polypeptide is 3-dehydroquinate synthase (Methanococcus maripaludis (strain DSM 14266 / JCM 13030 / NBRC 101832 / S2 / LL)).